Reading from the N-terminus, the 228-residue chain is L-ribulose-5-phosphate 4-epimerase UlaF (228 aa).

Substrate-binding positions include 26 to 27, 43 to 44, and 72 to 73; these read GN, SG, and SS. Zn(2+)-binding residues include D74, H93, and H95. Catalysis depends on D118, which acts as the Proton donor/acceptor. H167 contacts Zn(2+). Y225 serves as the catalytic Proton donor/acceptor.

This sequence belongs to the aldolase class II family. AraD/FucA subfamily. It depends on Zn(2+) as a cofactor.

It carries out the reaction L-ribulose 5-phosphate = D-xylulose 5-phosphate. It participates in cofactor degradation; L-ascorbate degradation; D-xylulose 5-phosphate from L-ascorbate: step 4/4. Functionally, catalyzes the isomerization of L-ribulose 5-phosphate to D-xylulose 5-phosphate. Is involved in the anaerobic L-ascorbate utilization. The chain is L-ribulose-5-phosphate 4-epimerase UlaF from Salmonella paratyphi A (strain ATCC 9150 / SARB42).